The primary structure comprises 181 residues: Inner membrane-spanning protein YciB (181 aa).

A run of 5 helical transmembrane segments spans residues 3 to 23 (LLFDFFPIVLFFIVYKFFGIY), 54 to 74 (SLAIIMVLGGATLFFQNPWFI), 81 to 101 (IYWLSALVFYGSGYIGSKPLI), 119 to 139 (LNLAWTLFFIVMGALNLYVAY), and 149 to 169 (FKLFGGVGFTLLFVLIQAFYL).

Belongs to the YciB family.

The protein localises to the cell inner membrane. In terms of biological role, plays a role in cell envelope biogenesis, maintenance of cell envelope integrity and membrane homeostasis. This is Inner membrane-spanning protein YciB from Legionella pneumophila (strain Corby).